The sequence spans 212 residues: Stringent starvation protein A homolog (212 aa).

In terms of domain architecture, GST N-terminal spans 9–87 (SIMTLFSDKT…YLDERFPHPP (79 aa)). The 121-residue stretch at 92-212 (YPVARGKSRL…SAPKNLMDEK (121 aa)) folds into the GST C-terminal domain.

Belongs to the GST superfamily. HSP26 family.

Its function is as follows. Forms an equimolar complex with the RNA polymerase holoenzyme (RNAP) but not with the core enzyme. This Pasteurella multocida (strain Pm70) protein is Stringent starvation protein A homolog (sspA).